The following is a 313-amino-acid chain: uncharacterized protein (313 aa).

2 consecutive transmembrane segments (helical) span residues 42 to 64 and 74 to 96; these read LVVL…LFLT and VRAY…TLYV.

The protein resides in the cell membrane. This is an uncharacterized protein from Treponema pallidum (strain Nichols).